A 927-amino-acid polypeptide reads, in one-letter code: Phospholipase D beta 2 (927 aa).

Residues 104–237 (PFGKASLKVL…YSGARIEGTY (134 aa)) form the C2 domain. Position 299 (aspartate 299) interacts with Ca(2+). Residues 439 to 474 (TIYTHHQKNLIVDADAGGNRRKIVAFVGGLDLCDGR) form the PLD phosphodiesterase 1 domain. Active-site residues include histidine 444, lysine 446, and aspartate 451. An a 1,2-diacyl-sn-glycero-3-phosphate-binding site is contributed by histidine 444. 2 residues coordinate Ca(2+): histidine 480 and histidine 512. A 1,2-diacyl-sn-glycero-3-phosphate-binding residues include glutamine 640 and histidine 778. Residues 773 to 800 (FMIYVHSKGMVVDDEYVVIGSANINQRS) form the PLD phosphodiesterase 2 domain. Active-site residues include histidine 778, lysine 780, and aspartate 785. Residue glutamate 841 participates in Ca(2+) binding.

The protein belongs to the phospholipase D family. C2-PLD subfamily. It depends on Ca(2+) as a cofactor. Expressed in stems, and to a lower amount in leaves, flowers and siliques.

It is found in the cytoplasm. The protein resides in the membrane. It carries out the reaction a 1,2-diacyl-sn-glycero-3-phosphocholine + H2O = a 1,2-diacyl-sn-glycero-3-phosphate + choline + H(+). Its activity is regulated as follows. Inhibited by neomycin. Functionally, hydrolyzes glycerol-phospholipids at the terminal phosphodiesteric bond to generate phosphatidic acids (PA). Plays an important role in various cellular processes, including phytohormone action, vesicular trafficking, secretion, cytoskeletal arrangement, meiosis, tumor promotion, pathogenesis, membrane deterioration and senescence. Can use phosphatidylserine or N-acylphosphatidylethanolamine as substrates. The protein is Phospholipase D beta 2 of Arabidopsis thaliana (Mouse-ear cress).